A 141-amino-acid chain; its full sequence is Nucleoside diphosphate kinase (141 aa).

ATP contacts are provided by lysine 11, phenylalanine 59, arginine 87, threonine 93, arginine 104, and asparagine 114. Histidine 117 acts as the Pros-phosphohistidine intermediate in catalysis.

It belongs to the NDK family. As to quaternary structure, homotetramer. The cofactor is Mg(2+).

The protein resides in the cytoplasm. The enzyme catalyses a 2'-deoxyribonucleoside 5'-diphosphate + ATP = a 2'-deoxyribonucleoside 5'-triphosphate + ADP. It carries out the reaction a ribonucleoside 5'-diphosphate + ATP = a ribonucleoside 5'-triphosphate + ADP. Functionally, major role in the synthesis of nucleoside triphosphates other than ATP. The ATP gamma phosphate is transferred to the NDP beta phosphate via a ping-pong mechanism, using a phosphorylated active-site intermediate. The protein is Nucleoside diphosphate kinase of Alkalilimnicola ehrlichii (strain ATCC BAA-1101 / DSM 17681 / MLHE-1).